The following is a 127-amino-acid chain: MAIVGLGTDIVEIERISAHVARSGDKLAKRVLTEAEFEIYQQHSQPSRYLAKRFAAKEAAAKALGTGIGRGVSFQHIHIGNTPDGAPTIDFTEGAQQRLTLLNGVVGHISIADEKSYAIATVILESR.

2 residues coordinate Mg(2+): Asp9 and Glu58.

This sequence belongs to the P-Pant transferase superfamily. AcpS family. Requires Mg(2+) as cofactor.

The protein resides in the cytoplasm. It carries out the reaction apo-[ACP] + CoA = holo-[ACP] + adenosine 3',5'-bisphosphate + H(+). In terms of biological role, transfers the 4'-phosphopantetheine moiety from coenzyme A to a Ser of acyl-carrier-protein. The chain is Holo-[acyl-carrier-protein] synthase from Shewanella oneidensis (strain ATCC 700550 / JCM 31522 / CIP 106686 / LMG 19005 / NCIMB 14063 / MR-1).